The sequence spans 649 residues: 1,4-alpha-glucan branching enzyme GlgB (649 aa).

The active-site Nucleophile is the Asp-315. The active-site Proton donor is the Glu-366.

It belongs to the glycosyl hydrolase 13 family. GlgB subfamily. As to quaternary structure, monomer.

It carries out the reaction Transfers a segment of a (1-&gt;4)-alpha-D-glucan chain to a primary hydroxy group in a similar glucan chain.. Its pathway is glycan biosynthesis; glycogen biosynthesis. Its function is as follows. Catalyzes the formation of the alpha-1,6-glucosidic linkages in glycogen by scission of a 1,4-alpha-linked oligosaccharide from growing alpha-1,4-glucan chains and the subsequent attachment of the oligosaccharide to the alpha-1,6 position. The chain is 1,4-alpha-glucan branching enzyme GlgB from Ligilactobacillus salivarius (strain UCC118) (Lactobacillus salivarius).